The primary structure comprises 287 residues: MKLAVYGKGGIGKSTSSCNISIALATRGKKVLQIGADPKHDSTFALTGFLIPTIMDTLQSKDYHYEEIWPEDIIYQGYGGVDCVEAGGPPAGAGCGGFVVGETTKLLKELNSFYEYDVILFDVLGDVVCGGFPAPLNYADYCLIVTDNGFDALFAANRIAASVREKARTHPLRLAGLVGNRTSKRDLIDKYVESCPMPVLEVLPLIEEIRVSRVKGKTLFEMTETDSSLNYVCQYYLNIADQLLAEPEGVVPKEVADRELFSLLSDFYHREASFTPQEGVVDSFLLV.

ATP-binding positions include 10-15 (GIGKST) and Lys39. Ser14 provides a ligand contact to Mg(2+). [4Fe-4S] cluster is bound by residues Cys95 and Cys129. 180–181 (NR) contributes to the ATP binding site.

Belongs to the NifH/BchL/ChlL family. In terms of assembly, homodimer. Protochlorophyllide reductase is composed of three subunits; ChlL, ChlN and ChlB. The cofactor is [4Fe-4S] cluster.

It is found in the plastid. The protein resides in the chloroplast. It carries out the reaction chlorophyllide a + oxidized 2[4Fe-4S]-[ferredoxin] + 2 ADP + 2 phosphate = protochlorophyllide a + reduced 2[4Fe-4S]-[ferredoxin] + 2 ATP + 2 H2O. Its pathway is porphyrin-containing compound metabolism; chlorophyll biosynthesis (light-independent). Functionally, component of the dark-operative protochlorophyllide reductase (DPOR) that uses Mg-ATP and reduced ferredoxin to reduce ring D of protochlorophyllide (Pchlide) to form chlorophyllide a (Chlide). This reaction is light-independent. The L component serves as a unique electron donor to the NB-component of the complex, and binds Mg-ATP. This is Light-independent protochlorophyllide reductase iron-sulfur ATP-binding protein from Nephroselmis olivacea (Green alga).